The chain runs to 509 residues: Maturase K (509 aa).

This sequence belongs to the intron maturase 2 family. MatK subfamily.

The protein resides in the plastid. It is found in the chloroplast. In terms of biological role, usually encoded in the trnK tRNA gene intron. Probably assists in splicing its own and other chloroplast group II introns. The sequence is that of Maturase K from Abies firma (Momi fir).